Here is a 96-residue protein sequence, read N- to C-terminus: Putative septation protein SpoVG (96 aa).

Belongs to the SpoVG family.

Its function is as follows. Could be involved in septation. The polypeptide is Putative septation protein SpoVG (Geobacillus sp. (strain WCH70)).